Consider the following 186-residue polypeptide: Signal peptidase I P (186 aa).

Residues 1–15 are Cytoplasmic-facing; that stretch reads MTKEKVFKKKSSILE. A helical membrane pass occupies residues 16–35; it reads WGKAIVIAVILALLIRNFLF. The Extracellular portion of the chain corresponds to 36–186; sequence EPYVVEGKSM…FPFSNMRKAK (151 aa). Active-site residues include Ser-44 and Lys-86.

This sequence belongs to the peptidase S26 family.

The protein resides in the cell membrane. It carries out the reaction Cleavage of hydrophobic, N-terminal signal or leader sequences from secreted and periplasmic proteins.. In Bacillus subtilis subsp. natto, this protein is Signal peptidase I P (sipP).